Reading from the N-terminus, the 316-residue chain is Olfactory receptor 2AG2 (316 aa).

Residues 1 to 30 (MELRNSTLGSGFILVGILNDSGSPELLYAT) are Extracellular-facing. N-linked (GlcNAc...) asparagine glycosylation is found at Asn-5 and Asn-19. Residues 31–51 (FTILYMLALTSNGLLLLAITI) traverse the membrane as a helical segment. Residues 52 to 56 (EARLH) are Cytoplasmic-facing. Residues 57–77 (MPMYLLLGQLSLMDLLFTSVV) form a helical membrane-spanning segment. Topologically, residues 78-97 (TPKALADFLRRENTISFGGC) are extracellular. Cys-97 and Cys-179 form a disulfide bridge. Residues 98–118 (ALQMFLALTMGSAEDLLLAFM) traverse the membrane as a helical segment. The Cytoplasmic portion of the chain corresponds to 119-139 (AYDRYVAICHPLKYMTLMSPR). The helical transmembrane segment at 140–160 (VCWIMVATSWILASLIAIGHT) threads the bilayer. Over 161 to 205 (MYTMHLPFCVSWEIRHLLCEIPPLLKLACADTSRYELIIYVTGVT) the chain is Extracellular. A helical membrane pass occupies residues 206 to 226 (FLLLPISAIVASYTLVLFTVL). The Cytoplasmic portion of the chain corresponds to 227–244 (RMPSNEGRKKALVTCSSH). The chain crosses the membrane as a helical span at residues 245–265 (LIVVGMFYGAATFMYVLPSSF). At 266-271 (HSPKQD) the chain is on the extracellular side. Residues 272-292 (NIISVFYTIVTPALNPLIYSL) traverse the membrane as a helical segment. The Cytoplasmic segment spans residues 293 to 316 (RNKEVMRALRRVLGKYILLAHSTL).

It belongs to the G-protein coupled receptor 1 family.

The protein localises to the cell membrane. Odorant receptor. The protein is Olfactory receptor 2AG2 (OR2AG2) of Homo sapiens (Human).